The sequence spans 423 residues: CinA-like protein (423 aa).

The protein belongs to the CinA family.

The protein is CinA-like protein of Chlorobaculum tepidum (strain ATCC 49652 / DSM 12025 / NBRC 103806 / TLS) (Chlorobium tepidum).